A 123-amino-acid polypeptide reads, in one-letter code: Sperm-associated antigen 11A (123 aa).

Positions 1 to 25 (MRQRLLPSVTSLLLVALLFPGSSQA) are cleaved as a signal peptide. N-linked (GlcNAc...) asparagine glycosylation is present at Asn29.

It belongs to the SPAG11 family.

It localises to the secreted. In terms of biological role, has antimicrobial activity against E.coli. Plays a role in the defense response in the male reproductive tract, contributing to sperm maturation, storage and protection. This Homo sapiens (Human) protein is Sperm-associated antigen 11A.